The primary structure comprises 169 residues: Regulator of sigma D (169 aa).

Belongs to the Rsd/AlgQ family. As to quaternary structure, interacts with RpoD.

Its subcellular location is the cytoplasm. Binds RpoD and negatively regulates RpoD-mediated transcription activation by preventing the interaction between the primary sigma factor RpoD with the catalytic core of the RNA polymerase and with promoter DNA. May be involved in replacement of the RNA polymerase sigma subunit from RpoD to RpoS during the transition from exponential growth to the stationary phase. The sequence is that of Regulator of sigma D from Yersinia pseudotuberculosis serotype O:1b (strain IP 31758).